Consider the following 1787-residue polypeptide: ATP-dependent RNA helicase DEAH11, chloroplastic (1787 aa).

The N-terminal 33 residues, 1 to 33, are a transit peptide targeting the chloroplast; it reads MRNSFPPSDGGRSTTDRRQQSFPSSSTNRYNSR. Residues 1–75 are disordered; sequence MRNSFPPSDG…DRAPSSGFSP (75 aa). Polar residues predominate over residues 20–60; that stretch reads QSFPSSSTNRYNSRSAQSSPPLNHCTTWNQQHSQYHNTNFP. A Helicase ATP-binding domain is found at 313–477; the sequence is LKKIHCEQIM…LFDCGILHVN (165 aa). ATP is bound at residue 326–333; it reads GETGSGKS. The DEAH box motif lies at 424 to 427; that stretch reads DEAH. The 167-residue stretch at 507 to 673 folds into the Helicase C-terminal domain; sequence DVVKMAVEIH…VALLRMLALG (167 aa). Positions 1557–1764 are TRIAD supradomain; the sequence is IELECPICLS…EPCYAHLRTI (208 aa). Zn(2+)-binding residues include cysteine 1561, cysteine 1564, cysteine 1577, histidine 1579, cysteine 1582, cysteine 1585, cysteine 1604, cysteine 1609, cysteine 1649, cysteine 1654, cysteine 1672, cysteine 1675, cysteine 1680, cysteine 1683, histidine 1688, cysteine 1693, cysteine 1719, and cysteine 1722. The RING-type 1 zinc-finger motif lies at 1561–1609; the sequence is CPICLSEVDDGYSLEGCSHLFCKACLLEQFEASMRNFDAFPILCSHIDC. An IBR-type zinc finger spans residues 1628 to 1693; the sequence is DELISASLSA…HLEYHPLITC (66 aa). The RING-type 2; atypical zinc-finger motif lies at 1719–1747; it reads CPICKSTIEKTDGCNHLQCRCGKHICWTC. The active site involves cysteine 1732. Positions 1737 and 1739 each coordinate Zn(2+).

The protein belongs to the DEAD box helicase family. DEAH subfamily.

The protein localises to the plastid. It localises to the chloroplast. It carries out the reaction ATP + H2O = ADP + phosphate + H(+). This is ATP-dependent RNA helicase DEAH11, chloroplastic from Arabidopsis thaliana (Mouse-ear cress).